Reading from the N-terminus, the 522-residue chain is Major facilitator-type transporter sorT (522 aa).

The disordered stretch occupies residues 1–21 (MSHTEPKAPVNTGEVENGHLY). A run of 12 helical transmembrane segments spans residues 52–72 (WFIA…SSAY), 89–109 (VFIV…AVWA), 121–141 (QILW…SAGS), 143–163 (NVAT…SPLV), 183–203 (TIYC…GGFV), 211–231 (WVQG…IVFI), 280–300 (WIFL…AIIY), 324–344 (IGGL…VYAI), 366–386 (LPPA…FAWT), 395–415 (VSII…LPIM), 427–447 (ASVL…FPLF), and 457–477 (IHWA…FPLI).

This sequence belongs to the major facilitator superfamily. Sugar transporter (TC 2.A.1.1) family.

It is found in the membrane. Its function is as follows. Major facilitator-type transporter; part of the gene cluster that mediates the biosynthesis of sorbicillinoids, a diverse group of yellow secondary metabolites that restrict growth of competing pathogenic fungi but not of bacteria. In Penicillium rubens (strain ATCC 28089 / DSM 1075 / NRRL 1951 / Wisconsin 54-1255) (Penicillium chrysogenum), this protein is Major facilitator-type transporter sorT.